The sequence spans 147 residues: Putative acetyltransferase BSU40680 (147 aa).

The N-acetyltransferase domain occupies 1-144 (MNVKKITSEQ…PHVLMTKQDD (144 aa)). CoA is bound by residues 74-76 (ICI) and 115-117 (GFY).

Belongs to the UPF0039 (ElaA) family.

Its function is as follows. Could catalyze the transfer of an acetyl group from acetyl coenzyme A (AcCoA) to an acceptor substrate and release both CoA and the acetylated product. The chain is Putative acetyltransferase BSU40680 (yybD) from Bacillus subtilis (strain 168).